A 20-amino-acid chain; its full sequence is Agglutinin beta-2 chain isoform 1 (20 aa).

The span at 1 to 10 (TQSTGTSQTI) shows a compositional bias: polar residues. A disordered region spans residues 1–20 (TQSTGTSQTIAVGLWGGPDN).

Belongs to the jacalin lectin family. As to quaternary structure, tetramer of four alpha chains associated with two or four beta chains.

Functionally, alpha-methyl-D-mannoside and D-mannose specific lectin. Binds IgA. This chain is Agglutinin beta-2 chain isoform 1, found in Morus nigra (Black mulberry).